We begin with the raw amino-acid sequence, 220 residues long: Ribonuclease HII (220 aa).

Positions 32-220 (KHIVGIDEAG…FAPIKGRYSV (189 aa)) constitute an RNase H type-2 domain. A divalent metal cation is bound by residues Asp38, Glu39, and Asp130.

This sequence belongs to the RNase HII family. Requires Mn(2+) as cofactor. Mg(2+) is required as a cofactor.

Its subcellular location is the cytoplasm. The catalysed reaction is Endonucleolytic cleavage to 5'-phosphomonoester.. Functionally, endonuclease that specifically degrades the RNA of RNA-DNA hybrids. The protein is Ribonuclease HII of Brucella anthropi (strain ATCC 49188 / DSM 6882 / CCUG 24695 / JCM 21032 / LMG 3331 / NBRC 15819 / NCTC 12168 / Alc 37) (Ochrobactrum anthropi).